The chain runs to 511 residues: uncharacterized protein (511 aa).

The 253-residue stretch at 2–254 folds into the CoA carboxyltransferase N-terminal domain; the sequence is LMDYEKERTE…NFQEKAPIHE (253 aa). Residues 2–506 are carboxyltransferase; the sequence is LMDYEKERTE…KEMTFTNRKH (505 aa). Residues 260 to 506 enclose the CoA carboxyltransferase C-terminal domain; the sequence is HFETPLADVI…KEMTFTNRKH (247 aa).

It belongs to the AccD/PCCB family.

This is an uncharacterized protein from Bacillus subtilis (strain 168).